A 488-amino-acid chain; its full sequence is 3-octaprenyl-4-hydroxybenzoate carboxy-lyase (488 aa).

Asn-172 provides a ligand contact to Mn(2+). Residues 175–177, 189–191, and 194–195 contribute to the prenylated FMN site; these read IYR, RWL, and RG. Glu-238 lines the Mn(2+) pocket. The active-site Proton donor is Asp-287.

The protein belongs to the UbiD family. In terms of assembly, homohexamer. Prenylated FMN is required as a cofactor. Mn(2+) serves as cofactor.

The protein localises to the cell membrane. The enzyme catalyses a 4-hydroxy-3-(all-trans-polyprenyl)benzoate + H(+) = a 2-(all-trans-polyprenyl)phenol + CO2. It functions in the pathway cofactor biosynthesis; ubiquinone biosynthesis. In terms of biological role, catalyzes the decarboxylation of 3-octaprenyl-4-hydroxy benzoate to 2-octaprenylphenol, an intermediate step in ubiquinone biosynthesis. The sequence is that of 3-octaprenyl-4-hydroxybenzoate carboxy-lyase from Pseudomonas syringae pv. syringae (strain B728a).